The sequence spans 448 residues: Damage-control phosphatase ARMT1 (448 aa).

Mn(2+)-binding residues include Asp-257 and Asn-258. 257–258 (DN) lines the substrate pocket. The S-adenosyl-L-methionine site is built by Glu-262 and Asp-295. Asp-295 provides a ligand contact to Mn(2+). Residues 371–375 (DLNYR) and Lys-408 each bind substrate. The short motif at 405–408 (RTLK) is the Subfamily III RTxK motif element.

It belongs to the damage-control phosphatase family. Sugar phosphate phosphatase III subfamily. It depends on Mn(2+) as a cofactor. The cofactor is Ni(2+). In terms of processing, automethylated.

It carries out the reaction beta-D-fructose 1-phosphate + H2O = D-fructose + phosphate. The enzyme catalyses beta-D-fructose 6-phosphate = dihydroxyacetone + D-glyceraldehyde 3-phosphate. It catalyses the reaction L-glutamyl-[protein] + S-adenosyl-L-methionine = [protein]-L-glutamate 5-O-methyl ester + S-adenosyl-L-homocysteine. In terms of biological role, metal-dependent phosphatase that shows phosphatase activity against several substrates, including fructose-1-phosphate and fructose-6-phosphate. Its preference for fructose-1-phosphate, a strong glycating agent that causes DNA damage rather than a canonical yeast metabolite, suggests a damage-control function in hexose phosphate metabolism. Has also been shown to have O-methyltransferase activity that methylates glutamate residues of target proteins to form gamma-glutamyl methyl ester residues. Possibly methylates PCNA, suggesting it is involved in the DNA damage response. The polypeptide is Damage-control phosphatase ARMT1 (Danio rerio (Zebrafish)).